The chain runs to 409 residues: DEP domain-containing mTOR-interacting protein (409 aa).

Residue methionine 1 is modified to N-acetylmethionine. The segment covering 1 to 10 (MEEGSSGGSG) has biased composition (gly residues). The tract at residues 1 to 23 (MEEGSSGGSGSSDSNAGGSGGVQ) is disordered. 2 consecutive DEP domains span residues 36–119 (TGEQ…RFRK) and 146–219 (PETT…QFRM). The DDEX motif motif lies at 217–235 (FRMNFRRRRRLMELLNETS). At serine 235 the chain carries Phosphoserine. Threonine 241 carries the phosphothreonine modification. Residues serine 244 and serine 258 each carry the phosphoserine modification. The residue at position 259 (threonine 259) is a Phosphothreonine. Residues serine 263, serine 265, serine 280, serine 282, serine 283, serine 286, and serine 287 each carry the phosphoserine modification. The BetaTrCP degron motif motif lies at 286–291 (SSGYFS). Phosphotyrosine is present on tyrosine 289. A phosphoserine mark is found at serine 291 and serine 293. The residue at position 295 (threonine 295) is a Phosphothreonine. Residues serine 297, serine 298, and serine 299 each carry the phosphoserine modification. The region spanning 330–407 (TFTIVGDAVG…TIVMEVMEEL (78 aa)) is the PDZ domain.

In terms of assembly, associated component of the mechanistic target of rapamycin complex 1 (mTORC1) which contains MTOR, MLST8 and RPTOR. Associated component of the mechanistic target of rapamycin complex 2 (mTORC2) which contains MTOR, MLST8, PROTOR1, RICTOR, MAPKAP1 and DEPTOR. Interacts (via PDZ domain) with MTOR; interacts with MTOR within both mTORC1 and mTORC2. Interacts (via PDZ domain) with MINAR1 (via N-terminus). Interacts with SIK3. In terms of processing, phosphorylation weakens interaction with MTOR within mTORC1 and mTORC2. Phosphorylated at Ser-286, Ser-287 and Ser-291 in response to mitogenic stimulation by MTOR: DEPTOR is either directly phosphorylated by MTOR or indirectly via proteins kinases that are activated by MTOR, such as CK1/CSNK1A1. Phosphorylation at Ser-286, Ser-287 and Ser-291 promotes ubiquitination by the SCF(BTRC) complex, followed by degradation. Phosphorylation at Ser-235 by MAPK3/ERK1 promotes deubiquitination by USP7, enhancing its stability. Phosphorylation at Tyr-291 by SYK impairs its interaction with MTOR, promoting mTORC1 and mTORC2 signaling. Post-translationally, ubiquitinated; leading to proteasomal degradation. Ubiquitination by the SCF(BTRC) and SCF(FBXW11) complexes following phosphorylation at Ser-286, Ser-287 and Ser-291 by MTOR, leads to its degradation by the proteasome. Deubiquitinated by OTUB1 in response to amino acid via a non-canonical mechanism, leading to DEPTOR stability. Deubiquitinated by USP7 following phosphorylation at Ser-235, promoting its stability.

It localises to the lysosome membrane. Inhibited upon phosphatidic acid-binding: phosphatidic acid produced upon mitogenic stimulation promotes DEPTOR dissociatiom from the mTORC1 and mTORC2 complexes, leading to their activation. Specifically binds unsaturated phosphatidic acid, such as 16:0-18:1, 18:0-18:1 and di-18:1. Inhibited when nutrients are present via a feedback loop: phosphorylation by MTOR promotes DEPTOR ubiquitination and degradation. In terms of biological role, negative regulator of the mTORC1 and mTORC2 complexes: inhibits the protein kinase activity of MTOR, thereby inactivating both complexes. DEPTOR inhibits mTORC1 and mTORC2 to induce autophagy. In contrast to AKT1S1/PRAS40, only partially inhibits mTORC1 activity. This is DEP domain-containing mTOR-interacting protein from Mus musculus (Mouse).